The following is a 376-amino-acid chain: Meiotically up-regulated gene 183 protein (376 aa).

A disordered region spans residues 334-376 (SLENVDDMDDIDVKEPLFSDNDEDVENSDSEDGSESIGSEDEE). The segment covering 353–376 (DNDEDVENSDSEDGSESIGSEDEE) has biased composition (acidic residues).

This sequence belongs to the RTT106 family.

In terms of biological role, has a role in meiosis. In Schizosaccharomyces pombe (strain 972 / ATCC 24843) (Fission yeast), this protein is Meiotically up-regulated gene 183 protein (mug183).